A 481-amino-acid chain; its full sequence is Sterol 14-alpha demethylase (481 aa).

Residues 1-21 (MFIEAIVLALTALILYSVYSV) traverse the membrane as a helical segment. Cys-422 lines the heme pocket.

Belongs to the cytochrome P450 family. Requires heme as cofactor.

The protein resides in the membrane. It carries out the reaction a 14alpha-methyl steroid + 3 reduced [NADPH--hemoprotein reductase] + 3 O2 = a Delta(14) steroid + formate + 3 oxidized [NADPH--hemoprotein reductase] + 4 H2O + 4 H(+). It functions in the pathway steroid biosynthesis; zymosterol biosynthesis; zymosterol from lanosterol: step 1/6. Functionally, catalyzes C14-demethylation of lanosterol which is critical for ergosterol biosynthesis. It transforms lanosterol into 4,4'-dimethyl cholesta-8,14,24-triene-3-beta-ol. Favors C4 dimethylated substrates, the substrate preference order is 24-methylenedihydrolanosterol &gt; 24,25-dihydrolanosterol &gt; lanosterol &gt; obtusifoliol &gt; norlanosterol. The sequence is that of Sterol 14-alpha demethylase from Trypanosoma cruzi (strain CL Brener).